The following is a 278-amino-acid chain: uncharacterized protein (278 aa).

A compositionally biased stretch (pro residues) spans 127-151 (PPTPSPPPPPAPTQPTRPTPGPAFF). Positions 127 to 174 (PPTPSPPPPPAPTQPTRPTPGPAFFPQPFKVELHHPTPKTSSLPAPSL) are disordered. Residues 164-174 (PKTSSLPAPSL) show a composition bias toward low complexity.

This is an uncharacterized protein from Botryotinia fuckeliana (Noble rot fungus).